Reading from the N-terminus, the 134-residue chain is Fluoride-specific ion channel FluC 2 (134 aa).

The next 4 membrane-spanning stretches (helical) occupy residues 10–30, 43–63, 67–87, and 100–120; these read LSAE…GALL, LLVN…PAAP, LLVG…MVDA, and FGLI…GFWL. The Na(+) site is built by Gly75 and Thr78.

It belongs to the fluoride channel Fluc/FEX (TC 1.A.43) family.

It is found in the cell inner membrane. The enzyme catalyses fluoride(in) = fluoride(out). Its activity is regulated as follows. Na(+) is not transported, but it plays an essential structural role and its presence is essential for fluoride channel function. Fluoride-specific ion channel. Important for reducing fluoride concentration in the cell, thus reducing its toxicity. This chain is Fluoride-specific ion channel FluC 2, found in Synechococcus sp. (strain CC9902).